We begin with the raw amino-acid sequence, 444 residues long: Xylose isomerase (444 aa).

Residues Asp-307 and Asp-309 each coordinate Mg(2+).

The protein belongs to the xylose isomerase family. In terms of assembly, homotetramer. Requires Mg(2+) as cofactor.

The protein localises to the cytoplasm. It catalyses the reaction alpha-D-xylose = alpha-D-xylulofuranose. This Thermotoga neapolitana (strain ATCC 49049 / DSM 4359 / NBRC 107923 / NS-E) protein is Xylose isomerase.